The sequence spans 157 residues: Phosphopantetheine adenylyltransferase (157 aa).

Residue Ser9 coordinates substrate. ATP contacts are provided by residues 9–10 and His17; that span reads SF. Substrate contacts are provided by Lys41, Thr73, and Arg87. ATP is bound by residues 88–90, Glu98, and 122–128; these read GIR and YQDISSS.

This sequence belongs to the bacterial CoaD family. As to quaternary structure, homohexamer. It depends on Mg(2+) as a cofactor.

The protein localises to the cytoplasm. The enzyme catalyses (R)-4'-phosphopantetheine + ATP + H(+) = 3'-dephospho-CoA + diphosphate. The protein operates within cofactor biosynthesis; coenzyme A biosynthesis; CoA from (R)-pantothenate: step 4/5. Functionally, reversibly transfers an adenylyl group from ATP to 4'-phosphopantetheine, yielding dephospho-CoA (dPCoA) and pyrophosphate. The chain is Phosphopantetheine adenylyltransferase from Oenococcus oeni (strain ATCC BAA-331 / PSU-1).